The primary structure comprises 504 residues: 2,3-bisphosphoglycerate-independent phosphoglycerate mutase (504 aa).

Residues Asp13 and Ser63 each contribute to the Mn(2+) site. Catalysis depends on Ser63, which acts as the Phosphoserine intermediate. Substrate is bound by residues His124, Arg153–Asp154, Arg183, Arg189, Arg254–Arg257, and Lys330. 5 residues coordinate Mn(2+): Asp397, His401, Asp438, His439, and His457.

This sequence belongs to the BPG-independent phosphoglycerate mutase family. Monomer. Mn(2+) is required as a cofactor.

The enzyme catalyses (2R)-2-phosphoglycerate = (2R)-3-phosphoglycerate. The protein operates within carbohydrate degradation; glycolysis; pyruvate from D-glyceraldehyde 3-phosphate: step 3/5. Its function is as follows. Catalyzes the interconversion of 2-phosphoglycerate and 3-phosphoglycerate. In Rhodopseudomonas palustris (strain ATCC BAA-98 / CGA009), this protein is 2,3-bisphosphoglycerate-independent phosphoglycerate mutase.